Reading from the N-terminus, the 211-residue chain is Pyridoxine/pyridoxamine 5'-phosphate oxidase (211 aa).

Substrate is bound by residues 7 to 10 (RREY) and Lys65. FMN-binding positions include 60-65 (RIVLLK), 75-76 (YT), Arg81, Lys82, and Gln104. Residues Tyr122, Arg126, and Ser130 each contribute to the substrate site. Residues 139-140 (QS) and Trp184 each bind FMN. Residue 190–192 (RLH) participates in substrate binding. Arg194 contributes to the FMN binding site.

Belongs to the pyridoxamine 5'-phosphate oxidase family. As to quaternary structure, homodimer. FMN serves as cofactor.

The enzyme catalyses pyridoxamine 5'-phosphate + O2 + H2O = pyridoxal 5'-phosphate + H2O2 + NH4(+). The catalysed reaction is pyridoxine 5'-phosphate + O2 = pyridoxal 5'-phosphate + H2O2. Its pathway is cofactor metabolism; pyridoxal 5'-phosphate salvage; pyridoxal 5'-phosphate from pyridoxamine 5'-phosphate: step 1/1. It functions in the pathway cofactor metabolism; pyridoxal 5'-phosphate salvage; pyridoxal 5'-phosphate from pyridoxine 5'-phosphate: step 1/1. Catalyzes the oxidation of either pyridoxine 5'-phosphate (PNP) or pyridoxamine 5'-phosphate (PMP) into pyridoxal 5'-phosphate (PLP). This is Pyridoxine/pyridoxamine 5'-phosphate oxidase from Vibrio cholerae serotype O1 (strain ATCC 39315 / El Tor Inaba N16961).